The chain runs to 583 residues: PTS system lactose-specific EIICB component (583 aa).

In terms of domain architecture, PTS EIIC type-3 spans 8–409; it reads IEKGKPFFEK…VVDVMIYYPF (402 aa). Transmembrane regions (helical) follow at residues 30–50, 64–84, 103–123, 137–157, 176–196, 222–242, 283–303, 339–359, and 381–401; these read GFIA…ITYV, GILM…VAGT, INFI…AADP, KGLL…NFFI, VFKD…LDLL, GWIG…VGIH, FVAT…FMWL, VFFI…KFFV, and IVMG…LIVV. A compositionally biased stretch (low complexity) spans 453-462; that stretch reads ANETTTTESA. Residues 453 to 475 form a disordered region; the sequence is ANETTTTESAPSDEEVSAKNSSN. Residues 480 to 583 enclose the PTS EIIB type-3 domain; sequence QTNVLVLCAG…LDFVQQQFEK (104 aa). The Phosphocysteine intermediate; for EIIB activity role is filled by C487. The residue at position 487 (C487) is a Phosphocysteine; by EIIA.

It is found in the cell membrane. The enzyme catalyses lactose(out) + N(pros)-phospho-L-histidyl-[protein] = lactose 6-phosphate(in) + L-histidyl-[protein]. Its function is as follows. The phosphoenolpyruvate-dependent sugar phosphotransferase system (sugar PTS), a major carbohydrate active transport system, catalyzes the phosphorylation of incoming sugar substrates concomitantly with their translocation across the cell membrane. The enzyme II LacEF PTS system is involved in lactose transport. The chain is PTS system lactose-specific EIICB component from Staphylococcus haemolyticus (strain JCSC1435).